Here is a 293-residue protein sequence, read N- to C-terminus: Sphingolipid C4-hydroxylase sur2 (293 aa).

3 consecutive transmembrane segments (helical) span residues 18–38 (LVSP…LHYI), 68–88 (AVLF…MFEG), and 127–147 (FIVP…WQYF). One can recognise a Fatty acid hydroxylase domain in the interval 136 to 270 (FAFFIIDSWQ…FTFWDHVLGT (135 aa)).

It belongs to the sterol desaturase family.

It is found in the endoplasmic reticulum membrane. It participates in membrane lipid metabolism; sphingolipid biosynthesis. In terms of biological role, required for hydroxylation of C-4 in the sphingoid moiety of ceramide. Involved in the response to syringomycin. The chain is Sphingolipid C4-hydroxylase sur2 (sur2) from Schizosaccharomyces pombe (strain 972 / ATCC 24843) (Fission yeast).